The chain runs to 280 residues: 4-diphosphocytidyl-2-C-methyl-D-erythritol kinase (280 aa).

The active site involves Lys8. 91 to 101 (PVAAGLAGGST) contributes to the ATP binding site. Residue Asp133 is part of the active site.

The protein belongs to the GHMP kinase family. IspE subfamily.

The enzyme catalyses 4-CDP-2-C-methyl-D-erythritol + ATP = 4-CDP-2-C-methyl-D-erythritol 2-phosphate + ADP + H(+). It participates in isoprenoid biosynthesis; isopentenyl diphosphate biosynthesis via DXP pathway; isopentenyl diphosphate from 1-deoxy-D-xylulose 5-phosphate: step 3/6. Functionally, catalyzes the phosphorylation of the position 2 hydroxy group of 4-diphosphocytidyl-2C-methyl-D-erythritol. The protein is 4-diphosphocytidyl-2-C-methyl-D-erythritol kinase of Clostridium botulinum (strain 657 / Type Ba4).